A 162-amino-acid chain; its full sequence is N5-carboxyaminoimidazole ribonucleotide mutase (162 aa).

S11, D14, and R41 together coordinate substrate.

This sequence belongs to the AIR carboxylase family. Class I subfamily.

The enzyme catalyses 5-carboxyamino-1-(5-phospho-D-ribosyl)imidazole + H(+) = 5-amino-1-(5-phospho-D-ribosyl)imidazole-4-carboxylate. It functions in the pathway purine metabolism; IMP biosynthesis via de novo pathway; 5-amino-1-(5-phospho-D-ribosyl)imidazole-4-carboxylate from 5-amino-1-(5-phospho-D-ribosyl)imidazole (N5-CAIR route): step 2/2. Functionally, catalyzes the conversion of N5-carboxyaminoimidazole ribonucleotide (N5-CAIR) to 4-carboxy-5-aminoimidazole ribonucleotide (CAIR). The protein is N5-carboxyaminoimidazole ribonucleotide mutase of Bacillus subtilis (strain 168).